The primary structure comprises 669 residues: uncharacterized protein (669 aa).

The next 6 helical transmembrane spans lie at 39–61 (LCPL…GTSW), 124–146 (ISLW…LISI), 153–175 (GIIY…YALG), 190–212 (GLAF…FFGV), 221–243 (FAPG…QTAL), and 263–285 (IAAG…IRYL). 2 consecutive RCK C-terminal domains span residues 316–397 (AGSL…KLIG) and 398–483 (KESD…LGGR). 5 helical membrane passes run 484-506 (PILN…GYIF), 516-538 (IPFA…YWRS), 558-580 (IGLN…ESFH), 585-607 (IWVA…VVGI), and 645-667 (VPYP…FAML).

The protein belongs to the AAE transporter (TC 2.A.81) family.

The protein resides in the cell membrane. This is an uncharacterized protein from Desulfotalea psychrophila (strain LSv54 / DSM 12343).